Here is a 159-residue protein sequence, read N- to C-terminus: Phosphopantetheine adenylyltransferase (159 aa).

Residue serine 9 participates in substrate binding. ATP contacts are provided by residues serine 9–phenylalanine 10 and histidine 17. 3 residues coordinate substrate: lysine 41, leucine 74, and lysine 88. ATP contacts are provided by residues glycine 89–arginine 91, glutamate 99, and tyrosine 123–threonine 129.

This sequence belongs to the bacterial CoaD family. As to quaternary structure, homohexamer. Mg(2+) is required as a cofactor.

It is found in the cytoplasm. The enzyme catalyses (R)-4'-phosphopantetheine + ATP + H(+) = 3'-dephospho-CoA + diphosphate. It functions in the pathway cofactor biosynthesis; coenzyme A biosynthesis; CoA from (R)-pantothenate: step 4/5. Its function is as follows. Reversibly transfers an adenylyl group from ATP to 4'-phosphopantetheine, yielding dephospho-CoA (dPCoA) and pyrophosphate. The polypeptide is Phosphopantetheine adenylyltransferase (Corynebacterium diphtheriae (strain ATCC 700971 / NCTC 13129 / Biotype gravis)).